A 185-amino-acid polypeptide reads, in one-letter code: Elongation factor P (185 aa).

Belongs to the elongation factor P family.

It localises to the cytoplasm. The protein operates within protein biosynthesis; polypeptide chain elongation. Its function is as follows. Involved in peptide bond synthesis. Stimulates efficient translation and peptide-bond synthesis on native or reconstituted 70S ribosomes in vitro. Probably functions indirectly by altering the affinity of the ribosome for aminoacyl-tRNA, thus increasing their reactivity as acceptors for peptidyl transferase. The protein is Elongation factor P of Anoxybacillus flavithermus (strain DSM 21510 / WK1).